The chain runs to 471 residues: Trimethyllysine dioxygenase (471 aa).

2 residues coordinate Fe cation: His-251 and Asp-253. The tract at residues 272–302 (KAAPSRPPPPPPPPPPPSEEKEAAGSAAGEA) is disordered. Positions 276–288 (SRPPPPPPPPPPP) are enriched in pro residues. His-430 contributes to the Fe cation binding site.

Belongs to the gamma-BBH/TMLD family. Requires Fe(2+) as cofactor. The cofactor is L-ascorbate.

Its subcellular location is the cytoplasm. The catalysed reaction is N(6),N(6),N(6)-trimethyl-L-lysine + 2-oxoglutarate + O2 = (3S)-3-hydroxy-N(6),N(6),N(6)-trimethyl-L-lysine + succinate + CO2. It functions in the pathway amine and polyamine biosynthesis; carnitine biosynthesis. Functionally, converts trimethyllysine (TML) into hydroxytrimethyllysine (HTML). The protein is Trimethyllysine dioxygenase (cbs-1) of Neurospora crassa (strain ATCC 24698 / 74-OR23-1A / CBS 708.71 / DSM 1257 / FGSC 987).